The sequence spans 315 residues: Glutathione synthetase (315 aa).

The ATP-grasp domain maps to 125–310; it reads KLYTAWFADL…ITGMLMDAIE (186 aa). 151-207 lines the ATP pocket; sequence WEKHGDIIMKPLDGMGGASIFRVKEGDPNIGVIAETLTELGNRYCMAQNYLPAIKDG. The Mg(2+) site is built by Glu281 and Asn283.

It belongs to the prokaryotic GSH synthase family. It depends on Mg(2+) as a cofactor. Requires Mn(2+) as cofactor.

The enzyme catalyses gamma-L-glutamyl-L-cysteine + glycine + ATP = glutathione + ADP + phosphate + H(+). It participates in sulfur metabolism; glutathione biosynthesis; glutathione from L-cysteine and L-glutamate: step 2/2. This chain is Glutathione synthetase, found in Salmonella typhi.